We begin with the raw amino-acid sequence, 385 residues long: Telomere-binding protein subunit beta (385 aa).

2 disordered regions span residues 231-329 and 343-385; these read AADH…ALTT and WHEK…AAKK. Positions 242 to 262 are enriched in basic residues; that stretch reads GGAKGKGKAAAKAAKGKKLSA. Basic and acidic residues predominate over residues 263-280; the sequence is KKGDSSAADVRKSVDKIV. 3 stretches are compositionally biased toward low complexity: residues 295 to 304, 312 to 326, and 365 to 375; these read KSQAPAAGKS, KAVP…KKSA, and GKASATSGKAS. Residues 376-385 show a composition bias toward basic residues; the sequence is KASKKTAAKK.

Heterodimer of an alpha and a beta subunit.

It localises to the nucleus. Its subcellular location is the chromosome. It is found in the telomere. Functionally, may function as protective capping of the single-stranded telomeric overhang. May also participate in telomere length regulation during DNA replication. Binds specifically to the T4G4-containing extension on the 3'strand and protects this region of the telomere from nuclease digestion and chemical modification. The polypeptide is Telomere-binding protein subunit beta (MAC-41A) (Sterkiella nova (Ciliate)).